We begin with the raw amino-acid sequence, 173 residues long: Crossover junction endodeoxyribonuclease RuvC (173 aa).

Residues Asp8, Glu67, and Asp139 contribute to the active site. Asp8, Glu67, and Asp139 together coordinate Mg(2+).

This sequence belongs to the RuvC family. Homodimer which binds Holliday junction (HJ) DNA. The HJ becomes 2-fold symmetrical on binding to RuvC with unstacked arms; it has a different conformation from HJ DNA in complex with RuvA. In the full resolvosome a probable DNA-RuvA(4)-RuvB(12)-RuvC(2) complex forms which resolves the HJ. Mg(2+) is required as a cofactor.

Its subcellular location is the cytoplasm. It carries out the reaction Endonucleolytic cleavage at a junction such as a reciprocal single-stranded crossover between two homologous DNA duplexes (Holliday junction).. The RuvA-RuvB-RuvC complex processes Holliday junction (HJ) DNA during genetic recombination and DNA repair. Endonuclease that resolves HJ intermediates. Cleaves cruciform DNA by making single-stranded nicks across the HJ at symmetrical positions within the homologous arms, yielding a 5'-phosphate and a 3'-hydroxyl group; requires a central core of homology in the junction. The consensus cleavage sequence is 5'-(A/T)TT(C/G)-3'. Cleavage occurs on the 3'-side of the TT dinucleotide at the point of strand exchange. HJ branch migration catalyzed by RuvA-RuvB allows RuvC to scan DNA until it finds its consensus sequence, where it cleaves and resolves the cruciform DNA. The sequence is that of Crossover junction endodeoxyribonuclease RuvC from Vibrio cholerae serotype O1 (strain ATCC 39541 / Classical Ogawa 395 / O395).